A 41-amino-acid chain; its full sequence is Virescein (41 aa).

Histidine amide is present on H41.

Monomer. As to expression, hemolymph.

The protein localises to the secreted. In terms of biological role, has antibacterial activity against Gram-positive and Gram-negative bacteria. This chain is Virescein, found in Heliothis virescens (Tobacco budworm moth).